Consider the following 285-residue polypeptide: Nucleotide-binding protein Glov_2163 (285 aa).

An ATP-binding site is contributed by 8-15 (GMSGSGKS). 59 to 62 (DIRG) is a binding site for GTP.

The protein belongs to the RapZ-like family.

In terms of biological role, displays ATPase and GTPase activities. This is Nucleotide-binding protein Glov_2163 from Trichlorobacter lovleyi (strain ATCC BAA-1151 / DSM 17278 / SZ) (Geobacter lovleyi).